Consider the following 343-residue polypeptide: Probable dual-specificity RNA methyltransferase RlmN (343 aa).

Residue Glu-91 is the Proton acceptor of the active site. Residues 97–327 (YKHGNSICVS…TTIRREMGSD (231 aa)) enclose the Radical SAM core domain. Cysteines 104 and 332 form a disulfide. Residues Cys-111, Cys-115, and Cys-118 each contribute to the [4Fe-4S] cluster site. Residues 158–159 (GE), Ser-190, 213–215 (SLH), and Asn-289 contribute to the S-adenosyl-L-methionine site. Catalysis depends on Cys-332, which acts as the S-methylcysteine intermediate.

This sequence belongs to the radical SAM superfamily. RlmN family. [4Fe-4S] cluster serves as cofactor.

Its subcellular location is the cytoplasm. It catalyses the reaction adenosine(2503) in 23S rRNA + 2 reduced [2Fe-2S]-[ferredoxin] + 2 S-adenosyl-L-methionine = 2-methyladenosine(2503) in 23S rRNA + 5'-deoxyadenosine + L-methionine + 2 oxidized [2Fe-2S]-[ferredoxin] + S-adenosyl-L-homocysteine. The enzyme catalyses adenosine(37) in tRNA + 2 reduced [2Fe-2S]-[ferredoxin] + 2 S-adenosyl-L-methionine = 2-methyladenosine(37) in tRNA + 5'-deoxyadenosine + L-methionine + 2 oxidized [2Fe-2S]-[ferredoxin] + S-adenosyl-L-homocysteine. Specifically methylates position 2 of adenine 2503 in 23S rRNA and position 2 of adenine 37 in tRNAs. This chain is Probable dual-specificity RNA methyltransferase RlmN, found in Clostridium novyi (strain NT).